A 382-amino-acid chain; its full sequence is Putative acetyl-CoA C-acetyltransferase VraB (382 aa).

Residue C86 is the Acyl-thioester intermediate of the active site. The Proton acceptor role is filled by H338.

The protein belongs to the thiolase-like superfamily. Thiolase family.

The sequence is that of Putative acetyl-CoA C-acetyltransferase VraB (vraB) from Staphylococcus epidermidis (strain ATCC 35984 / DSM 28319 / BCRC 17069 / CCUG 31568 / BM 3577 / RP62A).